A 235-amino-acid polypeptide reads, in one-letter code: Vacuolar protein sorting-associated protein 60.1 (235 aa).

The tract at residues 1–29 (MRRVFGAKKNTEPPPSIQDASDRINKRGD) is disordered. Residues 20–29 (ASDRINKRGD) are compositionally biased toward basic and acidic residues. Positions 99 to 148 (LKDAQQTMTALKSANKELKGMMKTVKIQDIDNLQDEMMDLMDVSSEIQES) form a coiled coil. The disordered stretch occupies residues 175–235 (MGNETEADGM…PAVPRASLRG (61 aa)).

It belongs to the SNF7 family. Interacts with SKD1/VPS4 and LIP5. Interacts with VPS2.2.

It localises to the endosome. It is found in the multivesicular body membrane. Its function is as follows. Probable peripherally associated component of the endosomal sorting required for transport complex III (ESCRT-III) which is involved in multivesicular bodies (MVBs) formation and sorting of endosomal cargo proteins into MVBs. The sequence is that of Vacuolar protein sorting-associated protein 60.1 from Arabidopsis thaliana (Mouse-ear cress).